The chain runs to 176 residues: Putative metal-dependent hydrolase BLi00869/BLi00870/BL03027 (176 aa).

Positions 65, 158, and 162 each coordinate Zn(2+).

This sequence belongs to the metal hydrolase YfiT family. As to quaternary structure, homodimer. It depends on Zn(2+) as a cofactor.

Its subcellular location is the cytoplasm. Functionally, possible metal-dependent hydrolase. This is Putative metal-dependent hydrolase BLi00869/BLi00870/BL03027 from Bacillus licheniformis (strain ATCC 14580 / DSM 13 / JCM 2505 / CCUG 7422 / NBRC 12200 / NCIMB 9375 / NCTC 10341 / NRRL NRS-1264 / Gibson 46).